A 352-amino-acid polypeptide reads, in one-letter code: Molybdenum import ATP-binding protein ModC (352 aa).

The ABC transporter domain occupies 1–229; it reads MLELNFSQTL…SVMNPWLPKE (229 aa). Position 31–38 (31–38) interacts with ATP; that stretch reads GVSGAGKT. The Mop domain maps to 289 to 352; that stretch reads QTSIRNVLRA…AQIKSVSITA (64 aa).

It belongs to the ABC transporter superfamily. Molybdate importer (TC 3.A.1.8) family. As to quaternary structure, the complex is composed of two ATP-binding proteins (ModC), two transmembrane proteins (ModB) and a solute-binding protein (ModA).

It is found in the cell inner membrane. It carries out the reaction molybdate(out) + ATP + H2O = molybdate(in) + ADP + phosphate + H(+). In terms of biological role, part of the ABC transporter complex ModABC involved in molybdenum import. Responsible for energy coupling to the transport system. In Escherichia coli O6:H1 (strain CFT073 / ATCC 700928 / UPEC), this protein is Molybdenum import ATP-binding protein ModC.